Reading from the N-terminus, the 415-residue chain is Extracellular signal-regulated kinase 1 (415 aa).

The 304-residue stretch at tyrosine 66 to leucine 369 folds into the Protein kinase domain. Residues valine 72–valine 80 and lysine 95 contribute to the ATP site. Aspartate 190 functions as the Proton acceptor in the catalytic mechanism. Position 226 is a phosphothreonine (threonine 226). A TXY motif is present at residues threonine 226–tyrosine 228. Tyrosine 228 is modified (phosphotyrosine).

The protein belongs to the protein kinase superfamily. CMGC Ser/Thr protein kinase family. MAP kinase subfamily. Requires Mg(2+) as cofactor. Post-translationally, dually phosphorylated on Thr-226 and Tyr-228, which activates the enzyme.

It catalyses the reaction L-seryl-[protein] + ATP = O-phospho-L-seryl-[protein] + ADP + H(+). It carries out the reaction L-threonyl-[protein] + ATP = O-phospho-L-threonyl-[protein] + ADP + H(+). Its activity is regulated as follows. Activated by tyrosine and threonine phosphorylation. The chain is Extracellular signal-regulated kinase 1 (CEK1) from Candida albicans (strain WO-1) (Yeast).